The chain runs to 240 residues: Triosephosphate isomerase (240 aa).

6–8 (NLK) is a substrate binding site. H88 serves as the catalytic Electrophile. E157 serves as the catalytic Proton acceptor. Positions 163 and 193 each coordinate substrate.

It belongs to the triosephosphate isomerase family. Homodimer.

Its subcellular location is the cytoplasm. It catalyses the reaction D-glyceraldehyde 3-phosphate = dihydroxyacetone phosphate. It functions in the pathway carbohydrate biosynthesis; gluconeogenesis. Its pathway is carbohydrate degradation; glycolysis; D-glyceraldehyde 3-phosphate from glycerone phosphate: step 1/1. Functionally, involved in the gluconeogenesis. Catalyzes stereospecifically the conversion of dihydroxyacetone phosphate (DHAP) to D-glyceraldehyde-3-phosphate (G3P). This Sulfurimonas denitrificans (strain ATCC 33889 / DSM 1251) (Thiomicrospira denitrificans (strain ATCC 33889 / DSM 1251)) protein is Triosephosphate isomerase.